A 413-amino-acid polypeptide reads, in one-letter code: uncharacterized protein (413 aa).

12 consecutive transmembrane segments (helical) span residues Phe42–Phe62, Leu75–Ser95, Leu109–Phe129, Leu133–Val153, Ser157–Leu179, Ile191–Leu211, Pro238–Phe258, Leu265–Leu285, Ser304–Asn324, Ile326–Ile346, Ala362–Gly382, and Phe383–Phe403.

This sequence belongs to the major facilitator superfamily.

It is found in the cell membrane. This is an uncharacterized protein from Buchnera aphidicola subsp. Schizaphis graminum (strain Sg).